Reading from the N-terminus, the 548-residue chain is Luciferin 4-monooxygenase (548 aa).

The Microbody targeting signal signature appears at 546 to 548; that stretch reads AKM.

It belongs to the ATP-dependent AMP-binding enzyme family. Mg(2+) serves as cofactor.

It localises to the peroxisome. The enzyme catalyses firefly D-luciferin + ATP + O2 = firefly oxyluciferin + hnu + AMP + CO2 + diphosphate. Its function is as follows. Produces green light with a wavelength of 544 nm. This is Luciferin 4-monooxygenase from Nipponoluciola cruciata (Genji firefly).